Consider the following 171-residue polypeptide: Lipoprotein signal peptidase (171 aa).

The next 3 membrane-spanning stretches (helical) occupy residues 7-27 (GLIA…WLYF), 64-84 (LGRW…SVWM), and 88-108 (GSRL…GNAI). Active-site residues include Asp118 and Asp136. A helical transmembrane segment spans residues 128–148 (SWYVFNVADAAIVAGVVGLIL).

It belongs to the peptidase A8 family.

It localises to the cell inner membrane. The enzyme catalyses Release of signal peptides from bacterial membrane prolipoproteins. Hydrolyzes -Xaa-Yaa-Zaa-|-(S,diacylglyceryl)Cys-, in which Xaa is hydrophobic (preferably Leu), and Yaa (Ala or Ser) and Zaa (Gly or Ala) have small, neutral side chains.. The protein operates within protein modification; lipoprotein biosynthesis (signal peptide cleavage). This protein specifically catalyzes the removal of signal peptides from prolipoproteins. This chain is Lipoprotein signal peptidase, found in Methylorubrum extorquens (strain PA1) (Methylobacterium extorquens).